The chain runs to 138 residues: Putative esterase HI_1161 (138 aa).

It belongs to the thioesterase PaaI family.

In Haemophilus influenzae (strain ATCC 51907 / DSM 11121 / KW20 / Rd), this protein is Putative esterase HI_1161.